We begin with the raw amino-acid sequence, 42 residues long: Delta-actinopoditoxin-Mb1a (42 aa).

Cystine bridges form between C1-C15, C8-C20, C14-C31, and C16-C42.

Belongs to the neurotoxin 06 (delta-actx) family. Expressed by the venom gland.

Its subcellular location is the secreted. In terms of biological role, neurotoxin that slows the inactivation of vertebrate tetrodotoxin-sensitive voltage-gated sodium channels (Nav) and most likely insect sodium channels presumably by binding to site 3 of the channel. Effects are an increase in resting tension, a muscle fasciculation and a decrease in indirect twitch tension. It fails to affect tetrodotoxin-resistant sodium currents. In vivo, is lethal to both vertebrates and insects. The protein is Delta-actinopoditoxin-Mb1a of Missulena bradleyi (Eastern mouse spider).